Here is a 156-residue protein sequence, read N- to C-terminus: Calglandulin (156 aa).

EF-hand domains lie at 8–43 (EQIT…VGIN), 44–79 (PTKR…YHEK), 82–117 (NQDE…AGEP), and 118–153 (LNEQ…ESFK). Positions 131, 133, 135, 137, and 142 each coordinate Ca(2+).

This sequence belongs to the calmodulin family. Calglandulin subfamily. In terms of tissue distribution, expressed by the venom gland.

The protein resides in the cytoplasm. In terms of biological role, may be involved in the cellular control mechanism of the secretion of toxins from the gland into the venom. This is Calglandulin from Bothrops insularis (Golden lancehead).